Reading from the N-terminus, the 996-residue chain is Oxysterol-binding protein homolog 3 (996 aa).

A GOLD domain region spans residues 1 to 183; the sequence is METIDIQNRS…KKKILFNASV (183 aa). Residues 75 to 114 are disordered; it reads GSSSNIEEHHRRSSQHSHSSSNGSDNKRKERSYSSLSISG. Residues S190 and S193 each carry the phosphoserine modification. T210 bears the Phosphothreonine mark. One can recognise a PH domain in the interval 221–315; it reads GRYLQGYLLK…WVDALQTCFD (95 aa). T323 carries the post-translational modification Phosphothreonine. A Phosphoserine modification is found at S324. A phosphothreonine mark is found at T325 and T352. Positions 338–372 are disordered; the sequence is EVINKSSPQDHDHLTPTATTKSALSHRQHTQKDMD. The FFAT signature appears at 514-520; the sequence is EFFDAEE. The disordered stretch occupies residues 556–611; it reads KEVQLSGSEQIASSSVESYTTNDENHSRKHLKNRHKNRRRGHPHHQKTKSAQSSTE. Residues 558–577 are compositionally biased toward polar residues; the sequence is VQLSGSEQIASSSVESYTTN. Residues 582–603 show a composition bias toward basic residues; that stretch reads SRKHLKNRHKNRRRGHPHHQKT. At S605 the chain carries Phosphoserine. Residues 642–982 form an OSBP-related domain (ORD) region; it reads SLLSFLRKNV…YITGPKSYWE (341 aa). A 1,2-diacyl-sn-glycero-3-phospho-(1D-myo-inositol 4-phosphate) contacts are provided by residues 657–660, K717, 745–746, and 945–949; these read SIAM, HR, and EQLQR.

It belongs to the OSBP family. As to quaternary structure, interacts with SCS2.

Its subcellular location is the cytoplasm. It is found in the endoplasmic reticulum membrane. Its function is as follows. Lipid transport protein (LTP) involved in non-vesicular transfer of lipids between membranes. Functions in phosphoinositide-coupled directional transport of various lipids by carrying the lipid molecule in a hydrophobic pocket and transferring it between membranes through the cytosol. Involved in maintenance of intracellular sterol distribution and homeostasis. May serve as a sensor of PI4P levels at PM-ER membrane contact site, regulating PI4P phosphatase SAC1 activity. May be involved in ergosterol transport from the plasma membrane (PM) to the ER, however it does not bind sterols directly. Plays a role in the positive regulation of vesicular transport of ceramide from the ER to the Golgi, negatively regulating COPII-mediated ER export of cargos. This chain is Oxysterol-binding protein homolog 3, found in Saccharomyces cerevisiae (strain ATCC 204508 / S288c) (Baker's yeast).